The following is a 524-amino-acid chain: Cytochrome P450 4F3 (524 aa).

A helical transmembrane segment spans residues 15 to 35 (AASPWLLLLLVGASCLLAYIL). Cys-468 serves as a coordination point for heme.

Belongs to the cytochrome P450 family. Heme serves as cofactor.

Its subcellular location is the endoplasmic reticulum membrane. The protein resides in the microsome membrane. It carries out the reaction leukotriene B4 + reduced [NADPH--hemoprotein reductase] + O2 = 18-hydroxy-leukotriene B4 + oxidized [NADPH--hemoprotein reductase] + H2O + H(+). The enzyme catalyses leukotriene B4 + reduced [NADPH--hemoprotein reductase] + O2 = 19-hydroxy-leukotriene B4 + oxidized [NADPH--hemoprotein reductase] + H2O + H(+). Its pathway is lipid metabolism; leukotriene B4 degradation. In terms of biological role, a cytochrome P450 monooxygenase involved in the metabolism of the pro-inflammatory lipid mediator leukotriene B4 (LTB4). Hydroxylates at the omega-1 and omega-2 positions LTB4. This oxidation step leads to LTB4 inactivation, which is postulated to be a crucial part of the resolution of inflammation. Mechanistically, uses molecular oxygen inserting one oxygen atom into a substrate, and reducing the second into a water molecule, with two electrons provided by NADPH via cytochrome P450 reductase (CPR; NADPH-ferrihemoprotein reductase). This Rattus norvegicus (Rat) protein is Cytochrome P450 4F3.